Consider the following 287-residue polypeptide: Eukaryotic translation initiation factor 3 subunit F (287 aa).

One can recognise an MPN domain in the interval 12–142; the sequence is VRVHPVVLFQ…IKAYVCVSLG (131 aa).

The protein belongs to the eIF-3 subunit F family. As to quaternary structure, component of the eukaryotic translation initiation factor 3 (eIF-3) complex.

Its subcellular location is the cytoplasm. Functionally, component of the eukaryotic translation initiation factor 3 (eIF-3) complex, which is involved in protein synthesis of a specialized repertoire of mRNAs and, together with other initiation factors, stimulates binding of mRNA and methionyl-tRNAi to the 40S ribosome. The eIF-3 complex specifically targets and initiates translation of a subset of mRNAs involved in cell proliferation. The sequence is that of Eukaryotic translation initiation factor 3 subunit F from Aedes aegypti (Yellowfever mosquito).